The following is a 436-amino-acid chain: MRSLSSVALLSAIGAASAQAGPWGQCAGISHTGPTTCESGWSCVYLNDWYSQCQPGAATSSSTTVSSTKQPSSTVAAPSSTTSAHTLPTGSGSFAKTDGLKFNIDGKTKYFAGTNAYWLPFLTNNADVDAVFDHLQQTGLKILRTWGFNDVNTIPGSGTVYFQLHDKATGTSTINTGANGLQRLDYVISAAEKHGIKLIIPFVNNWDDYGGMNAYINAYGGSKTEWYTNEKIQSVYQAYIKAIVSRYRDSPAIFAWELGNEPRCKGCSTDVIYNWVAKTSAYIKSLDPNHMVTTGEEGMGLTVDSDGSYPYSKDEGSDFARNLAAPDIDFGVYHLYVADWGVSDNAWGNRWIKSHAKVCEAAGKPCLFEEYGIKDDHCGDSLKWQKTSLTTTANSADLFWQYGQQLSTGASPNDHYTIYYGTDDWKCAVIDHISQI.

The N-terminal stretch at 1 to 18 (MRSLSSVALLSAIGAASA) is a signal peptide. A CBM1 domain is found at 19–54 (QAGPWGQCAGISHTGPTTCESGWSCVYLNDWYSQCQ). A disordered region spans residues 60–88 (SSSTTVSSTKQPSSTVAAPSSTTSAHTLP). Positions 79–113 (SSTTSAHTLPTGSGSFAKTDGLKFNIDGKTKYFAG) are ser-rich linker. Positions 114 to 436 (TNAYWLPFLT…CAVIDHISQI (323 aa)) are catalytic. The substrate site is built by tryptophan 146 and asparagine 260. Residue glutamate 261 is the Proton donor of the active site. Residue tyrosine 336 coordinates substrate. The Nucleophile role is filled by glutamate 370. Substrate is bound at residue tryptophan 400.

It belongs to the glycosyl hydrolase 5 (cellulase A) family.

The protein localises to the secreted. It catalyses the reaction Random hydrolysis of (1-&gt;4)-beta-D-mannosidic linkages in mannans, galactomannans and glucomannans.. Endo-1,4-mannanase, a crucial enzyme for depolymerization of seed galactomannans and wood galactoglucomannans. The polypeptide is Mannan endo-1,4-beta-mannosidase F (manF) (Aspergillus clavatus (strain ATCC 1007 / CBS 513.65 / DSM 816 / NCTC 3887 / NRRL 1 / QM 1276 / 107)).